The following is a 53-amino-acid chain: UPF0391 membrane protein ETA_06630 (53 aa).

Transmembrane regions (helical) follow at residues 4–24 (WGIIFLVIALIAAALGFGGLA) and 27–47 (AAWAAKVVFVVGIVIFLISLF).

Belongs to the UPF0391 family.

Its subcellular location is the cell membrane. The chain is UPF0391 membrane protein ETA_06630 from Erwinia tasmaniensis (strain DSM 17950 / CFBP 7177 / CIP 109463 / NCPPB 4357 / Et1/99).